The primary structure comprises 396 residues: Elongation factor Tu (396 aa).

In terms of domain architecture, tr-type G spans lysine 10–glutamate 206. Residues glycine 19 to threonine 26 form a G1 region. Residue glycine 19–threonine 26 coordinates GTP. Threonine 26 provides a ligand contact to Mg(2+). Positions glycine 60–asparagine 64 are G2. The segment at aspartate 81–glycine 84 is G3. Residues aspartate 81–histidine 85 and asparagine 136–aspartate 139 each bind GTP. Residues asparagine 136–aspartate 139 form a G4 region. The tract at residues serine 174–lysine 176 is G5.

This sequence belongs to the TRAFAC class translation factor GTPase superfamily. Classic translation factor GTPase family. EF-Tu/EF-1A subfamily. As to quaternary structure, monomer.

It localises to the cytoplasm. It carries out the reaction GTP + H2O = GDP + phosphate + H(+). In terms of biological role, GTP hydrolase that promotes the GTP-dependent binding of aminoacyl-tRNA to the A-site of ribosomes during protein biosynthesis. This Cupriavidus pinatubonensis (strain JMP 134 / LMG 1197) (Cupriavidus necator (strain JMP 134)) protein is Elongation factor Tu.